Here is an 89-residue protein sequence, read N- to C-terminus: MVKIRLRRTGKTKQPSYRIVVADSRSPRDGKFIETIGYYLPTRQPKVLEVNADRARYWLGVGAQPTDVVVKLLKRVNILDEQGKVVAES.

It belongs to the bacterial ribosomal protein bS16 family.

The chain is Small ribosomal subunit protein bS16 from Chloroflexus aggregans (strain MD-66 / DSM 9485).